Reading from the N-terminus, the 190-residue chain is Double zinc ribbon protein MJ0416 (190 aa).

The segment at 134-183 (CPNCNNYISDSWKYCAHCGAKLKEEEEEVLRCPNCKRPVQPEWIVCPYCG) adopts a DZANK-type zinc-finger fold.

The chain is Double zinc ribbon protein MJ0416 from Methanocaldococcus jannaschii (strain ATCC 43067 / DSM 2661 / JAL-1 / JCM 10045 / NBRC 100440) (Methanococcus jannaschii).